The following is a 213-amino-acid chain: Ribosomal RNA small subunit methyltransferase G (213 aa).

S-adenosyl-L-methionine contacts are provided by residues Gly-75, Phe-80, 128-129, and Arg-144; that span reads IE.

Belongs to the methyltransferase superfamily. RNA methyltransferase RsmG family.

The protein localises to the cytoplasm. The enzyme catalyses guanosine(527) in 16S rRNA + S-adenosyl-L-methionine = N(7)-methylguanosine(527) in 16S rRNA + S-adenosyl-L-homocysteine. Functionally, specifically methylates the N7 position of guanine in position 527 of 16S rRNA. The chain is Ribosomal RNA small subunit methyltransferase G from Brucella abortus (strain S19).